We begin with the raw amino-acid sequence, 136 residues long: Protein NrdI (136 aa).

The protein belongs to the NrdI family.

Functionally, probably involved in ribonucleotide reductase function. This chain is Protein NrdI, found in Klebsiella pneumoniae (strain 342).